The primary structure comprises 335 residues: tRNA N6-adenosine threonylcarbamoyltransferase (335 aa).

A divalent metal cation contacts are provided by histidine 109, histidine 113, and tyrosine 130. Substrate-binding positions include tyrosine 130–glycine 134, aspartate 162, glycine 177, glutamate 181, and asparagine 266. An a divalent metal cation-binding site is contributed by aspartate 294.

It belongs to the KAE1 / TsaD family. Component of the EKC/KEOPS complex composed of at least GON7, TP53RK, TPRKB, OSGEP and LAGE3; the whole complex dimerizes. Requires a divalent metal cation as cofactor. Widely expressed at low level. Expressed at intermediate level in lung. Weakly expressed in testis, skeletal muscle, kidney, liver, spleen, brain and heart.

The protein resides in the cytoplasm. It localises to the nucleus. The enzyme catalyses L-threonylcarbamoyladenylate + adenosine(37) in tRNA = N(6)-L-threonylcarbamoyladenosine(37) in tRNA + AMP + H(+). In terms of biological role, component of the EKC/KEOPS complex that is required for the formation of a threonylcarbamoyl group on adenosine at position 37 (t(6)A37) in tRNAs that read codons beginning with adenine. The complex is probably involved in the transfer of the threonylcarbamoyl moiety of threonylcarbamoyl-AMP (TC-AMP) to the N6 group of A37. OSGEP likely plays a direct catalytic role in this reaction, but requires other protein(s) of the complex to fulfill this activity. This Mus musculus (Mouse) protein is tRNA N6-adenosine threonylcarbamoyltransferase (Osgep).